Reading from the N-terminus, the 509-residue chain is Citrinin biosynthesis transcriptional activator mrl3 (509 aa).

The tract at residues 1 to 22 is disordered; the sequence is MASTAHRQPSRPTTRQRQRTGR. The zn(2)-C6 fungal-type DNA-binding region spans 24–51; the sequence is CEECRRRKLRCDGQQPRCGVCVDSGVTC. Positions 97-143 are disordered; it reads STPLTNDHHDGCSVSSASSRSDSNPPPTVSEPDMSLPNTTTSVSSAP. A compositionally biased stretch (low complexity) spans 109–119; that stretch reads SVSSASSRSDS. Over residues 132 to 143 the composition is skewed to polar residues; that stretch reads LPNTTTSVSSAP.

Its subcellular location is the nucleus. Transcription factor that regulates the expression of the gene cluster that mediates the biosynthesis of the mycotoxin citrinin, a hepato-nephrotoxic compound to humans due to inhibition of respiration complex III. This is Citrinin biosynthesis transcriptional activator mrl3 from Monascus ruber (Mold).